Reading from the N-terminus, the 425-residue chain is Serine--tRNA ligase (425 aa).

Residue 231–233 (TAE) coordinates L-serine. Residue 262–264 (RSE) coordinates ATP. E285 is a binding site for L-serine. 349–352 (EISS) contributes to the ATP binding site. Residue S385 coordinates L-serine.

Belongs to the class-II aminoacyl-tRNA synthetase family. Type-1 seryl-tRNA synthetase subfamily. In terms of assembly, homodimer. The tRNA molecule binds across the dimer.

It localises to the cytoplasm. The enzyme catalyses tRNA(Ser) + L-serine + ATP = L-seryl-tRNA(Ser) + AMP + diphosphate + H(+). It carries out the reaction tRNA(Sec) + L-serine + ATP = L-seryl-tRNA(Sec) + AMP + diphosphate + H(+). Its pathway is aminoacyl-tRNA biosynthesis; selenocysteinyl-tRNA(Sec) biosynthesis; L-seryl-tRNA(Sec) from L-serine and tRNA(Sec): step 1/1. In terms of biological role, catalyzes the attachment of serine to tRNA(Ser). Is also able to aminoacylate tRNA(Sec) with serine, to form the misacylated tRNA L-seryl-tRNA(Sec), which will be further converted into selenocysteinyl-tRNA(Sec). The sequence is that of Serine--tRNA ligase from Bacillus velezensis (strain DSM 23117 / BGSC 10A6 / LMG 26770 / FZB42) (Bacillus amyloliquefaciens subsp. plantarum).